Consider the following 209-residue polypeptide: Small ribosomal subunit protein uS4 (209 aa).

Residues 22 to 45 (RGRNPLLRKPNPPGQHGMQRKKKS) are disordered. Residues 93–154 (CRLDNIVYRL…KSRRLAIVTE (62 aa)) form the S4 RNA-binding domain.

The protein belongs to the universal ribosomal protein uS4 family. In terms of assembly, part of the 30S ribosomal subunit. Contacts protein S5. The interaction surface between S4 and S5 is involved in control of translational fidelity.

Its function is as follows. One of the primary rRNA binding proteins, it binds directly to 16S rRNA where it nucleates assembly of the body of the 30S subunit. In terms of biological role, with S5 and S12 plays an important role in translational accuracy. The chain is Small ribosomal subunit protein uS4 from Chlamydia muridarum (strain MoPn / Nigg).